The sequence spans 44 residues: Thymosin beta-4 (44 aa).

Residues 1–25 are compositionally biased toward basic and acidic residues; it reads MADKPDMAEIEKFDKSKLKKTETQE. A disordered region spans residues 1-44; the sequence is MADKPDMAEIEKFDKSKLKKTETQEKNPLPSKETIEQEKQAGES. Ala2 carries the N-acetylalanine modification. Lys4 carries the post-translational modification N6-acetyllysine. N6-acetyllysine; alternate is present on Lys12. Lys12 is covalently cross-linked (Glycyl lysine isopeptide (Lys-Gly) (interchain with G-Cter in SUMO2); alternate). Thr23 carries the phosphothreonine modification. Lys26 is modified (N6-acetyllysine). A Phosphoserine modification is found at Ser31. Lys32 is subject to N6-acetyllysine. Residues 33–44 show a composition bias toward basic and acidic residues; that stretch reads ETIEQEKQAGES. Thr34 is modified (phosphothreonine). N6-acetyllysine is present on Lys39.

The protein belongs to the thymosin beta family. Originally found in thymus but it is widely distributed in many tissues.

The protein localises to the cytoplasm. Its subcellular location is the cytoskeleton. Its function is as follows. Plays an important role in the organization of the cytoskeleton. Binds to and sequesters actin monomers (G actin) and therefore inhibits actin polymerization. In terms of biological role, seraspenide inhibits the entry of hematopoietic pluripotent stem cells into the S-phase. This Oryctolagus cuniculus (Rabbit) protein is Thymosin beta-4 (TMSB4).